A 245-amino-acid polypeptide reads, in one-letter code: MAQQLSARQPRYKRILLKLSGEALMGSEEFGIDPKVLDRMALEIGQLVGIGVQVGLVIGGGNLFRGAALSAAGMDRVTGDHMGMLATVMNGLAMRDALERSNIPALVMSAISMVGVTDHYDRRKAMRHLGGGEVVIFSAGTGNPFFTTDSAACLRAIEIDADVVLKATKVDGVYTADPFKDPNAEKFERLTYDEVLDRKLGVMDLTAICLCRDQNMPLRVFNMNKPGALLNIVVGGAEGTLIEEG.

18–21 is a binding site for ATP; that stretch reads KLSG. Gly-60 contributes to the UMP binding site. ATP is bound by residues Gly-61 and Arg-65. UMP contacts are provided by residues Asp-80 and 141-148; that span reads TGNPFFTT. Thr-168, Tyr-174, and Asp-177 together coordinate ATP.

It belongs to the UMP kinase family. As to quaternary structure, homohexamer.

It localises to the cytoplasm. It carries out the reaction UMP + ATP = UDP + ADP. Its pathway is pyrimidine metabolism; CTP biosynthesis via de novo pathway; UDP from UMP (UMPK route): step 1/1. Inhibited by UTP. Functionally, catalyzes the reversible phosphorylation of UMP to UDP. This is Uridylate kinase from Pseudomonas aeruginosa (strain UCBPP-PA14).